A 412-amino-acid polypeptide reads, in one-letter code: Lipoyl synthase, mitochondrial (412 aa).

A mitochondrion-targeting transit peptide spans 1–28; it reads MASIAPSLKRAHAPLRKALTASSTIRAF. 7 residues coordinate [4Fe-4S] cluster: cysteine 124, cysteine 129, cysteine 135, cysteine 155, cysteine 159, cysteine 162, and serine 372. The region spanning 138–361 is the Radical SAM core domain; the sequence is GSDKNAATAT…NKRALDMGFL (224 aa).

The protein belongs to the radical SAM superfamily. Lipoyl synthase family. [4Fe-4S] cluster serves as cofactor.

It is found in the mitochondrion. The enzyme catalyses [[Fe-S] cluster scaffold protein carrying a second [4Fe-4S](2+) cluster] + N(6)-octanoyl-L-lysyl-[protein] + 2 oxidized [2Fe-2S]-[ferredoxin] + 2 S-adenosyl-L-methionine + 4 H(+) = [[Fe-S] cluster scaffold protein] + N(6)-[(R)-dihydrolipoyl]-L-lysyl-[protein] + 4 Fe(3+) + 2 hydrogen sulfide + 2 5'-deoxyadenosine + 2 L-methionine + 2 reduced [2Fe-2S]-[ferredoxin]. It functions in the pathway protein modification; protein lipoylation via endogenous pathway; protein N(6)-(lipoyl)lysine from octanoyl-[acyl-carrier-protein]: step 2/2. Its function is as follows. Catalyzes the radical-mediated insertion of two sulfur atoms into the C-6 and C-8 positions of the octanoyl moiety bound to the lipoyl domains of lipoate-dependent enzymes, thereby converting the octanoylated domains into lipoylated derivatives. This Fusarium vanettenii (strain ATCC MYA-4622 / CBS 123669 / FGSC 9596 / NRRL 45880 / 77-13-4) (Fusarium solani subsp. pisi) protein is Lipoyl synthase, mitochondrial.